The primary structure comprises 514 residues: Extracellular exo-inulinase inuE (514 aa).

Positions 1 to 18 are cleaved as a signal peptide; it reads MRAFLALIFLTFVMNVES. Substrate contacts are provided by residues 33 to 34 and Gln52; that span reads ND. The Nucleophile role is filled by Asp34. An N-linked (GlcNAc...) asparagine glycan is attached at Asn56. Residues Trp60 and Ser95 each contribute to the substrate site. Asn104 and Asn110 each carry an N-linked (GlcNAc...) asparagine glycan. 162-163 contributes to the substrate binding site; sequence RD. Asn197 and Asn203 each carry an N-linked (GlcNAc...) asparagine glycan. Positions 214 and 300 each coordinate substrate. Glu214 serves as the catalytic Proton donor/acceptor. Asn357, Asn371, Asn389, and Asn422 each carry an N-linked (GlcNAc...) asparagine glycan.

This sequence belongs to the glycosyl hydrolase 32 family.

Its subcellular location is the secreted. The catalysed reaction is Hydrolysis of terminal, non-reducing (2-&gt;1)- and (2-&gt;6)-linked beta-D-fructofuranose residues in fructans.. Exo-inulinase involved in utilization of the plant storage polymer inulin, consisting of fructooligosaccharides with a degree of polymerization (DP) value from 2 to 60. Splits off terminal fructose units successively from the non-reducing end of the inulin molecule. This chain is Extracellular exo-inulinase inuE, found in Meyerozyma guilliermondii (Yeast).